The primary structure comprises 240 residues: BLOC-1-related complex subunit 8 homolog (240 aa).

Disordered regions lie at residues 1 to 33 (MSSI…GSHG) and 163 to 240 (KTFS…EKIN). 2 stretches are compositionally biased toward low complexity: residues 7-26 (SSTG…NNIS) and 163-179 (KTFS…QQQQ). The span at 180-190 (TNLTPSKPTLS) shows a compositional bias: polar residues. Residues 196–205 (DNNNNNNNLN) are compositionally biased toward low complexity. Residues 208 to 240 (EKIEKEEKIEKEDEGKEKDEKEKDDKDLNEKIN) are compositionally biased toward basic and acidic residues. Positions 211–239 (EKEEKIEKEDEGKEKDEKEKDDKDLNEKI) form a coiled coil.

The protein belongs to the BORCS8 family.

The protein resides in the lysosome membrane. Functionally, may participate in the coupling of lysosomes to microtubule plus-end-directed kinesin motor. This is BLOC-1-related complex subunit 8 homolog from Dictyostelium discoideum (Social amoeba).